Reading from the N-terminus, the 273-residue chain is MSDMHSLLVAAILGVVEGLTEFLPVSSTGHMIIVGHLLGFEGETAKTFEVVIQLGSILAVVVMFWRRLFGLIGIHFGRPPQHEGEGKGRLTLIHILLGMVPAVVLGLIFHDAIKSLFNPINVMYALVVGGVLLIAAELLKPKEPKAPGLDDMTYRQAFMIGCFQCLALWPGFSRSGATISGGMLMGVSRYAASEFSFLLAVPMMMGATALDLYKSYHFLTAADFPMFAVGFVTAFLVALVAIKTFLQLIKRISFIPFAIYRFIVAAAVYVVFF.

7 consecutive transmembrane segments (helical) span residues 45–65 (AKTFEVVIQLGSILAVVVMFW), 90–110 (LTLIHILLGMVPAVVLGLIFH), 116–136 (LFNPINVMYALVVGGVLLIAA), 154–173 (YRQAFMIGCFQCLALWPGFS), 190–210 (YAASEFSFLLAVPMMMGATAL), 222–242 (ADFPMFAVGFVTAFLVALVAI), and 252–272 (ISFIPFAIYRFIVAAAVYVVF).

This sequence belongs to the UppP family.

It is found in the cell inner membrane. The enzyme catalyses di-trans,octa-cis-undecaprenyl diphosphate + H2O = di-trans,octa-cis-undecaprenyl phosphate + phosphate + H(+). Catalyzes the dephosphorylation of undecaprenyl diphosphate (UPP). Confers resistance to bacitracin. The sequence is that of Undecaprenyl-diphosphatase from Enterobacter sp. (strain 638).